The primary structure comprises 215 residues: Large ribosomal subunit protein uL3c (215 aa).

Residues Arg-132–Gly-151 form a disordered region.

This sequence belongs to the universal ribosomal protein uL3 family. As to quaternary structure, part of the 50S ribosomal subunit.

It is found in the plastid. Its subcellular location is the chloroplast. In terms of biological role, one of the primary rRNA binding proteins, it binds directly near the 3'-end of the 23S rRNA, where it nucleates assembly of the 50S subunit. The protein is Large ribosomal subunit protein uL3c (rpl3) of Cyanidium caldarium (Red alga).